The chain runs to 101 residues: Small ribosomal subunit protein uS14 (101 aa).

Residues 1-20 form a disordered region; the sequence is MAKTSAVEKNKRRRKLVANH. The span at 10–20 shows a compositional bias: basic residues; the sequence is NKRRRKLVANH.

The protein belongs to the universal ribosomal protein uS14 family. As to quaternary structure, part of the 30S ribosomal subunit. Contacts proteins S3 and S10.

Its function is as follows. Binds 16S rRNA, required for the assembly of 30S particles and may also be responsible for determining the conformation of the 16S rRNA at the A site. The protein is Small ribosomal subunit protein uS14 of Sinorhizobium medicae (strain WSM419) (Ensifer medicae).